Here is an 869-residue protein sequence, read N- to C-terminus: Rho GTPase-activating protein 27 (869 aa).

Residues 6–69 (EGDVYVLVEH…PAQYVRELPA (64 aa)) form the SH3 domain. Positions 104–137 (GADGSSAEPRGRASSLCGPARQRTSGQRNSLAPG) are disordered. A phosphoserine mark is found at Ser155, Ser215, and Ser249. 2 WW domains span residues 246–280 (PRLSPVWETHTDAGTGRPYYYNPDTGVTTWESPFE) and 299–333 (ESLETEWGQYWDEESGRVFFYNPLTGETVWEDETE). Disordered stretches follow at residues 275–299 (WESPFEAPEGATSPTTSRASVGSGE), 331–389 (ETEE…DLGP), and 447–474 (VPVPAPRSGRKSSQDSDTPAQASPPEEK). Residues 331–343 (ETEELEDDPEEQL) show a composition bias toward acidic residues. A compositionally biased stretch (polar residues) spans 345 to 356 (MQPSLSPRSPGQ). Ser350 carries the post-translational modification Phosphoserine. A WW 3 domain is found at 414–447 (QFTQEQWVRLEDQEGKPYFYNPEDSSVQWELPQV). Residues Ser459 and Ser462 each carry the phosphoserine modification. The residue at position 464 (Thr464) is a Phosphothreonine. At Ser469 the chain carries Phosphoserine. The PH domain maps to 477–593 (TLDKAGVLHR…WHKAIAEGIE (117 aa)). A disordered region spans residues 598–644 (DLPQREEGEPSSADFGSSERLGSWKEEDVRPNAASPSLNPGSQESDL). Positions 631-642 (ASPSLNPGSQES) are enriched in polar residues. Ser632 bears the Phosphoserine mark. Positions 677–866 (CALAQLCERE…LILHQCADIF (190 aa)) constitute a Rho-GAP domain.

Interacts with SH3KBP1/CIN85.

It localises to the cytoplasm. The protein localises to the membrane. Rho GTPase-activating protein which may be involved in clathrin-mediated endocytosis. GTPase activators for the Rho-type GTPases act by converting them to an inactive GDP-bound state. Has activity toward CDC42 and RAC1. The chain is Rho GTPase-activating protein 27 (Arhgap27) from Rattus norvegicus (Rat).